The sequence spans 158 residues: S-ribosylhomocysteine lyase (158 aa).

Fe cation contacts are provided by histidine 54, histidine 58, and cysteine 124.

This sequence belongs to the LuxS family. As to quaternary structure, homodimer. Requires Fe cation as cofactor.

The catalysed reaction is S-(5-deoxy-D-ribos-5-yl)-L-homocysteine = (S)-4,5-dihydroxypentane-2,3-dione + L-homocysteine. Involved in the synthesis of autoinducer 2 (AI-2) which is secreted by bacteria and is used to communicate both the cell density and the metabolic potential of the environment. The regulation of gene expression in response to changes in cell density is called quorum sensing. Catalyzes the transformation of S-ribosylhomocysteine (RHC) to homocysteine (HC) and 4,5-dihydroxy-2,3-pentadione (DPD). The chain is S-ribosylhomocysteine lyase from Lactobacillus gasseri (strain ATCC 33323 / DSM 20243 / BCRC 14619 / CIP 102991 / JCM 1131 / KCTC 3163 / NCIMB 11718 / NCTC 13722 / AM63).